Consider the following 227-residue polypeptide: Cytochrome c oxidase subunit 2 (227 aa).

Residues 1 to 14 are Mitochondrial intermembrane-facing; sequence MAYPFQLGLQDATS. A helical membrane pass occupies residues 15–45; that stretch reads PIMEELLHFHDHTLMIVFLISSLVLYIISSM. Over 46–59 the chain is Mitochondrial matrix; the sequence is LTTKLTHTSTMDAQ. Residues 60–87 traverse the membrane as a helical segment; the sequence is EVETVWTILPAIILVLIALPSLRILYMM. Residues 88-227 are Mitochondrial intermembrane-facing; it reads DETNNPSLTV…YFETWSALMV (140 aa). Cu cation-binding residues include His161, Cys196, Glu198, Cys200, His204, and Met207. A Mg(2+)-binding site is contributed by Glu198. Tyr218 bears the Phosphotyrosine mark.

This sequence belongs to the cytochrome c oxidase subunit 2 family. As to quaternary structure, component of the cytochrome c oxidase (complex IV, CIV), a multisubunit enzyme composed of 14 subunits. The complex is composed of a catalytic core of 3 subunits MT-CO1, MT-CO2 and MT-CO3, encoded in the mitochondrial DNA, and 11 supernumerary subunits COX4I, COX5A, COX5B, COX6A, COX6B, COX6C, COX7A, COX7B, COX7C, COX8 and NDUFA4, which are encoded in the nuclear genome. The complex exists as a monomer or a dimer and forms supercomplexes (SCs) in the inner mitochondrial membrane with NADH-ubiquinone oxidoreductase (complex I, CI) and ubiquinol-cytochrome c oxidoreductase (cytochrome b-c1 complex, complex III, CIII), resulting in different assemblies (supercomplex SCI(1)III(2)IV(1) and megacomplex MCI(2)III(2)IV(2)). Found in a complex with TMEM177, COA6, COX18, COX20, SCO1 and SCO2. Interacts with TMEM177 in a COX20-dependent manner. Interacts with COX20. Interacts with COX16. Cu cation serves as cofactor.

Its subcellular location is the mitochondrion inner membrane. The catalysed reaction is 4 Fe(II)-[cytochrome c] + O2 + 8 H(+)(in) = 4 Fe(III)-[cytochrome c] + 2 H2O + 4 H(+)(out). Component of the cytochrome c oxidase, the last enzyme in the mitochondrial electron transport chain which drives oxidative phosphorylation. The respiratory chain contains 3 multisubunit complexes succinate dehydrogenase (complex II, CII), ubiquinol-cytochrome c oxidoreductase (cytochrome b-c1 complex, complex III, CIII) and cytochrome c oxidase (complex IV, CIV), that cooperate to transfer electrons derived from NADH and succinate to molecular oxygen, creating an electrochemical gradient over the inner membrane that drives transmembrane transport and the ATP synthase. Cytochrome c oxidase is the component of the respiratory chain that catalyzes the reduction of oxygen to water. Electrons originating from reduced cytochrome c in the intermembrane space (IMS) are transferred via the dinuclear copper A center (CU(A)) of subunit 2 and heme A of subunit 1 to the active site in subunit 1, a binuclear center (BNC) formed by heme A3 and copper B (CU(B)). The BNC reduces molecular oxygen to 2 water molecules using 4 electrons from cytochrome c in the IMS and 4 protons from the mitochondrial matrix. This Chrysocyon brachyurus (Maned wolf) protein is Cytochrome c oxidase subunit 2 (MT-CO2).